The primary structure comprises 140 residues: Zinc finger SWIM domain-containing protein 7 (140 aa).

Residues 76–114 form an SWIM-type zinc finger; the sequence is YTCFTSCHYCPCPAFSFTVLRRNESLMCKHLLAVILSQA.

Belongs to the SWS1 family.

Its subcellular location is the nucleus. Its function is as follows. Involved in early stages of the homologous recombination repair (HRR) pathway of double-stranded DNA breaks arising during DNA replication or induced by DNA-damaging agents. This Danio rerio (Zebrafish) protein is Zinc finger SWIM domain-containing protein 7 (zswim7).